Here is a 304-residue protein sequence, read N- to C-terminus: Phosphatidylinositol mannoside acyltransferase (304 aa).

Catalysis depends on histidine 126, which acts as the Proton acceptor. Positions 126 and 164 each coordinate hexadecanoyl-CoA. Residue glutamate 200 is part of the active site. Hexadecanoyl-CoA-binding residues include serine 206 and glutamate 229.

It belongs to the LpxL/LpxM/LpxP family. In terms of assembly, monomer.

Its subcellular location is the cell inner membrane. It carries out the reaction a 2,6-O-bis(alpha-D-mannopyranosyl)-1-phosphatidyl-1D-myo-inositol + an acyl-CoA = a 2-O-(alpha-D-mannosyl)-6-O-(6-O-acyl-alpha-D-mannosyl)-1-phosphatidyl-1D-myo-inositol + CoA. The catalysed reaction is a 1,2-diacyl-sn-glycero-3-phospho-[alpha-D-mannopyranosyl-(1&lt;-&gt;6)-D-myo-inositol] + an acyl-CoA = a 1,2-diacyl-sn-glycero-3-phospho-[alpha-D-6-acyl-mannopyranosyl-(1&lt;-&gt;6)-D-myo-inositol] + CoA. The protein operates within phospholipid metabolism; phosphatidylinositol metabolism. In terms of biological role, catalyzes the transfer of a palmitoyl moiety from palmitoyl-CoA to the 6-position of the mannose ring linked to the 2-position of myo-inositol in phosphatidyl-myo-inositol monomannoside (PIM1) or dimannoside (PIM2). The protein is Phosphatidylinositol mannoside acyltransferase of Mycolicibacterium smegmatis (strain ATCC 700084 / mc(2)155) (Mycobacterium smegmatis).